The primary structure comprises 273 residues: Histone H1.2 (273 aa).

Positions 1-63 (MSIEEENVPT…TKKKTTSSHP (63 aa)) are disordered. Ser-2 bears the N-acetylserine mark. Residue Ser-14 is modified to Phosphoserine. Positions 33–59 (GKSKKTTTAKATKKPVKAAAPTKKKTT) are enriched in basic residues. One can recognise an H15 domain in the interval 61 to 130 (SHPTYEEMIK…KVKASFKIPS (70 aa)). Residues Lys-156 and Lys-165 each participate in a glycyl lysine isopeptide (Lys-Gly) (interchain with G-Cter in ubiquitin) cross-link. Low complexity-rich tracts occupy residues 193-216 (KVTA…VAAK) and 237-256 (KKVA…PAKS). The tract at residues 193 to 273 (KVTAAKPKSK…KRASTRKAKK (81 aa)) is disordered. The segment covering 257–273 (VKVKSPAKRASTRKAKK) has biased composition (basic residues).

It belongs to the histone H1/H5 family.

The protein resides in the nucleus. It localises to the chromosome. Functionally, histones H1 are necessary for the condensation of nucleosome chains into higher-order structures. The polypeptide is Histone H1.2 (Arabidopsis thaliana (Mouse-ear cress)).